Consider the following 236-residue polypeptide: MPPRELSEAEPPPLRAPTPPPRRRSAPPELGIKCVLVGDGAVGKSSLIVSYTCNGYPARYRPTALDTFSVQVLVDGAPVRIELWDTAGQEDFDRLRSLCYPDTDVFLACFSVVQPSSFQNITEKWLPEIRTHNPQAPVLLVGTQADLRDDVNVLIQLDQGGREGPVPQPQAQGLAEKIRACCYLECSALTQKNLKEVFDSAILSAIEHKARLEKKLNAKGVRTLSRCRWKKFFCFV.

Positions 1–27 (MPPRELSEAEPPPLRAPTPPPRRRSAP) are disordered. Pro residues predominate over residues 10 to 20 (EPPPLRAPTPP). At S25 the chain carries Phosphoserine. Residues 38 to 45 (GDGAVGKS), 85 to 89 (DTAGQ), and 143 to 146 (TQAD) contribute to the GTP site. C234 is lipidated: S-palmitoyl cysteine.

Belongs to the small GTPase superfamily. Rho family. Interacts with PAK2. The cofactor is Mg(2+). In terms of tissue distribution, highly expressed in pancreas, placenta, and fetal brain.

The protein localises to the cell membrane. Its subcellular location is the endosome membrane. Its function is as follows. Plays a role in the control of the actin cytoskeleton via activation of the JNK pathway. The polypeptide is Rho-related GTP-binding protein RhoV (Homo sapiens (Human)).